The following is a 409-amino-acid chain: Histidinol dehydrogenase homolog (409 aa).

Belongs to the histidinol dehydrogenase family.

This chain is Histidinol dehydrogenase homolog, found in Synechocystis sp. (strain ATCC 27184 / PCC 6803 / Kazusa).